Consider the following 171-residue polypeptide: Co-chaperone protein HscB (171 aa).

In terms of domain architecture, J spans 2–74 (DYFTLFGLPA…LMRAEYLLSL (73 aa)).

Belongs to the HscB family. As to quaternary structure, interacts with HscA and stimulates its ATPase activity. Interacts with IscU.

In terms of biological role, co-chaperone involved in the maturation of iron-sulfur cluster-containing proteins. Seems to help targeting proteins to be folded toward HscA. The sequence is that of Co-chaperone protein HscB from Shigella flexneri serotype 5b (strain 8401).